The sequence spans 260 residues: uncharacterized protein (260 aa).

A signal peptide spans 1 to 22; that stretch reads MGYLKRFALYISILVLIVMVAG. A lipid anchor (N-palmitoyl cysteine) is attached at Cys-23. A lipid anchor (S-diacylglycerol cysteine) is attached at Cys-23.

The protein belongs to the staphylococcal tandem lipoprotein family.

The protein localises to the cell membrane. This is an uncharacterized protein from Staphylococcus aureus (strain bovine RF122 / ET3-1).